Consider the following 101-residue polypeptide: Urease subunit beta (101 aa).

This sequence belongs to the urease beta subunit family. As to quaternary structure, heterotrimer of UreA (gamma), UreB (beta) and UreC (alpha) subunits. Three heterotrimers associate to form the active enzyme.

It localises to the cytoplasm. It catalyses the reaction urea + 2 H2O + H(+) = hydrogencarbonate + 2 NH4(+). Its pathway is nitrogen metabolism; urea degradation; CO(2) and NH(3) from urea (urease route): step 1/1. The sequence is that of Urease subunit beta from Haemophilus influenzae (strain 86-028NP).